Here is a 438-residue protein sequence, read N- to C-terminus: AP-2 complex subunit mu (438 aa).

Residues Lys177–Arg437 form the MHD domain.

Belongs to the adaptor complexes medium subunit family. As to quaternary structure, adaptor protein complex 2 (AP-2) is a heterotetramer composed of two large adaptins (alpha-type and beta-type subunits), a medium adaptin (mu-type subunit) and a small adaptin (sigma-type subunit).

Its subcellular location is the cell membrane. It localises to the membrane. It is found in the coated pit. The protein resides in the golgi apparatus. The protein localises to the trans-Golgi network membrane. Its function is as follows. Subunit of the adaptor protein complex 2 (AP-2). Adaptor protein complexes function in protein transport via transport vesicles in different membrane traffic pathways. Adaptor protein complexes are vesicle coat components and appear to be involved in cargo selection and vesicle formation. AP-2 is involved in clathrin-dependent endocytosis in which cargo proteins are incorporated into vesicles surrounded by clathrin (clathrin-coated vesicles, CCVs) which are destined for fusion with the early endosome. AP-2 recognizes Y-X-X-Phi endocytosis signal motif within the cytosolic tails of transmembrane cargo molecules. The complex binds polyphosphoinositides. This Arabidopsis thaliana (Mouse-ear cress) protein is AP-2 complex subunit mu (AP2M).